The following is a 127-amino-acid chain: Holo-[acyl-carrier-protein] synthase (127 aa).

Mg(2+)-binding residues include aspartate 8 and glutamate 57.

The protein belongs to the P-Pant transferase superfamily. AcpS family. Mg(2+) is required as a cofactor.

It is found in the cytoplasm. The catalysed reaction is apo-[ACP] + CoA = holo-[ACP] + adenosine 3',5'-bisphosphate + H(+). Its function is as follows. Transfers the 4'-phosphopantetheine moiety from coenzyme A to a Ser of acyl-carrier-protein. The chain is Holo-[acyl-carrier-protein] synthase from Hydrogenovibrio crunogenus (strain DSM 25203 / XCL-2) (Thiomicrospira crunogena).